Here is a 103-residue protein sequence, read N- to C-terminus: Large ribosomal subunit protein uL24 (103 aa).

The protein belongs to the universal ribosomal protein uL24 family. As to quaternary structure, part of the 50S ribosomal subunit.

Its function is as follows. One of two assembly initiator proteins, it binds directly to the 5'-end of the 23S rRNA, where it nucleates assembly of the 50S subunit. One of the proteins that surrounds the polypeptide exit tunnel on the outside of the subunit. The protein is Large ribosomal subunit protein uL24 of Lachnospira eligens (strain ATCC 27750 / DSM 3376 / VPI C15-48 / C15-B4) (Eubacterium eligens).